A 582-amino-acid polypeptide reads, in one-letter code: Arginine--tRNA ligase (582 aa).

The 'HIGH' region motif lies at 127–137; sequence PNLAKEMHVGH.

The protein belongs to the class-I aminoacyl-tRNA synthetase family. As to quaternary structure, monomer.

The protein resides in the cytoplasm. It catalyses the reaction tRNA(Arg) + L-arginine + ATP = L-arginyl-tRNA(Arg) + AMP + diphosphate. This Psychromonas ingrahamii (strain DSM 17664 / CCUG 51855 / 37) protein is Arginine--tRNA ligase.